A 389-amino-acid chain; its full sequence is Chaperone protein DnaJ (389 aa).

The 65-residue stretch at 6 to 70 (DYYEILGLSK…EKRAQYDRFG (65 aa)) folds into the J domain. The CR-type zinc finger occupies 131-213 (GVRKDIDIPR…CSGAGRVRSR (83 aa)). Cys144, Cys147, Cys161, Cys164, Cys187, Cys190, Cys201, and Cys204 together coordinate Zn(2+). CXXCXGXG motif repeat units follow at residues 144–151 (CSTCSGTG), 161–168 (CPNCGGTG), 187–194 (CSACHGRG), and 201–208 (CPTCSGAG). The interval 145–167 (STCSGTGAKPGTSPKRCPNCGGT) is disordered. Positions 351 to 389 (LSNGKKPEAEERSRSDKQKSEKPRKSKGLFEKVKDAFES) are disordered. The span at 355 to 389 (KKPEAEERSRSDKQKSEKPRKSKGLFEKVKDAFES) shows a compositional bias: basic and acidic residues.

Belongs to the DnaJ family. As to quaternary structure, homodimer. Zn(2+) is required as a cofactor.

The protein localises to the cytoplasm. Its function is as follows. Participates actively in the response to hyperosmotic and heat shock by preventing the aggregation of stress-denatured proteins and by disaggregating proteins, also in an autonomous, DnaK-independent fashion. Unfolded proteins bind initially to DnaJ; upon interaction with the DnaJ-bound protein, DnaK hydrolyzes its bound ATP, resulting in the formation of a stable complex. GrpE releases ADP from DnaK; ATP binding to DnaK triggers the release of the substrate protein, thus completing the reaction cycle. Several rounds of ATP-dependent interactions between DnaJ, DnaK and GrpE are required for fully efficient folding. Also involved, together with DnaK and GrpE, in the DNA replication of plasmids through activation of initiation proteins. This chain is Chaperone protein DnaJ, found in Methanosarcina mazei (strain ATCC BAA-159 / DSM 3647 / Goe1 / Go1 / JCM 11833 / OCM 88) (Methanosarcina frisia).